The sequence spans 33 residues: uncharacterized protein (33 aa).

This is an uncharacterized protein from Saccharomyces cerevisiae (strain ATCC 204508 / S288c) (Baker's yeast).